Consider the following 211-residue polypeptide: Probable GTP-binding protein EngB (211 aa).

The EngB-type G domain occupies Glu-30 to Leu-204. GTP is bound by residues Gly-38 to Ser-45, Gly-64 to Leu-68, Asp-82 to Gly-85, Thr-149 to Asp-152, and Leu-182 to Ala-185. Positions 45 and 66 each coordinate Mg(2+).

Belongs to the TRAFAC class TrmE-Era-EngA-EngB-Septin-like GTPase superfamily. EngB GTPase family. It depends on Mg(2+) as a cofactor.

Functionally, necessary for normal cell division and for the maintenance of normal septation. The protein is Probable GTP-binding protein EngB of Pseudomonas syringae pv. tomato (strain ATCC BAA-871 / DC3000).